A 755-amino-acid chain; its full sequence is MAAKRPPASTLKWCQQEMGPICEGIGMVVRSQIGYDGRRIEKQIRRKALQTVVMGGQDVDPLKEPNKTNAPLLSPTLPSTNEALQRARVVAAGIETFAKLMSQGTYPGSAGFTVSETGERKYMKQTSPVQSNIVANLMATADKLSKGVISLAPFPLPTITKLGTWVIANPTAQLPIPPQLKSAIPAIGQIETLIQSILGVQGPVSSVSRAPRKLKLEGVTDQVVLEPETIHATVDVEPIDKTLTKEEAEFLIKAARSVDDDNAETAIFGTQKAKPKVYRPELPKNFEVNLEMGNVHTLTRSNESSVPATRIGRLATFGQLAFGLLGGATAEVTRRTFGIGKRLQEEGIPKNPFLSEANADRIVATLCRVRGAALKLGQMLSIQDSSTVPPALLQIFERVRQSADFMPIKQVHRQMKDAFGDDWREKFEHFDDKPFACASIGQVHKAVLKDGRNVAVKVQYPGVAEGIDSDIDNLVSVLSVGGIFPKGMFLDAFVGVARRELKQECDYEREARAMKKFRELIADWQDVYVPEVIDELSSSRVLTTELVYGKPVDACVEEPQVVRDYIAGKFIELCLKEIFLWRFMQTDPNWSNFFLGKHPKTGEPRLVLLDFGASRAYGKKFVDIYMNIIKSAYDGDKKKIIEYSREIGFLTGYETSVMEDAHVESVMIMGETLASNHPYNFANQDVTMRIQKLIPVMLEHRLTSPPEEIYSLHRKLSGCYLLAAKLKATVSCGGLFHEIHENYVFGEDGIDINID.

Residues 57-78 (QDVDPLKEPNKTNAPLLSPTLP) form a disordered region. A compositionally biased stretch (polar residues) spans 67-78 (KTNAPLLSPTLP). ATP is bound by residues 435–443 (FACASIGQV) and lysine 457. Aspartate 587 (proton acceptor) is an active-site residue.

The protein belongs to the protein kinase superfamily. ADCK protein kinase family.

It is found in the mitochondrion. It functions in the pathway cofactor biosynthesis; ubiquinone biosynthesis. Atypical kinase involved in the biosynthesis of coenzyme Q, also named ubiquinone, an essential lipid-soluble electron transporter for aerobic cellular respiration. Its substrate specificity is still unclear: may act as a protein kinase that mediates phosphorylation of coq-3. According to other reports, acts as a small molecule kinase, possibly a lipid kinase that phosphorylates a prenyl lipid in the ubiquinone biosynthesis pathway, as suggested by its ability to bind coenzyme Q lipid intermediates. This Caenorhabditis elegans protein is Atypical kinase coq-8, mitochondrial (coq-8).